Here is a 264-residue protein sequence, read N- to C-terminus: Thymidylate synthase (264 aa).

DUMP is bound at residue Arg-21. A (6R)-5,10-methylene-5,6,7,8-tetrahydrofolate-binding site is contributed by His-51. Residue 126–127 participates in dUMP binding; that stretch reads RR. Cys-146 (nucleophile) is an active-site residue. Residues 166–169, Asn-177, and 207–209 contribute to the dUMP site; these read RSCD and HLY. Residue Asp-169 participates in (6R)-5,10-methylene-5,6,7,8-tetrahydrofolate binding. Residue Ala-263 participates in (6R)-5,10-methylene-5,6,7,8-tetrahydrofolate binding.

Belongs to the thymidylate synthase family. Bacterial-type ThyA subfamily. Homodimer.

Its subcellular location is the cytoplasm. It carries out the reaction dUMP + (6R)-5,10-methylene-5,6,7,8-tetrahydrofolate = 7,8-dihydrofolate + dTMP. Its pathway is pyrimidine metabolism; dTTP biosynthesis. Catalyzes the reductive methylation of 2'-deoxyuridine-5'-monophosphate (dUMP) to 2'-deoxythymidine-5'-monophosphate (dTMP) while utilizing 5,10-methylenetetrahydrofolate (mTHF) as the methyl donor and reductant in the reaction, yielding dihydrofolate (DHF) as a by-product. This enzymatic reaction provides an intracellular de novo source of dTMP, an essential precursor for DNA biosynthesis. This chain is Thymidylate synthase, found in Shewanella putrefaciens (strain CN-32 / ATCC BAA-453).